The primary structure comprises 448 residues: Pentatricopeptide repeat-containing protein At1g80550, mitochondrial (448 aa).

The transit peptide at 1–21 directs the protein to the mitochondrion; it reads MLLLRRLNRVRIASPYSVRLL. 10 PPR repeats span residues 80–110, 116–146, 150–186, 188–222, 223–257, 258–292, 293–327, 331–359, 360–394, and 395–429; these read TTET…MIGN, NHVT…LDDF, DETS…GFSV, NTKI…GVTK, DLFS…RMKL, DVVA…GCEP, NVAT…GCQP, TYMC…GVRP, KMDT…GDTP, and DSAA…GLSP.

Belongs to the PPR family. P subfamily.

The protein resides in the mitochondrion. This is Pentatricopeptide repeat-containing protein At1g80550, mitochondrial from Arabidopsis thaliana (Mouse-ear cress).